Reading from the N-terminus, the 230-residue chain is Inactive L-threonine 3-dehydrogenase, mitochondrial (230 aa).

It belongs to the NAD(P)-dependent epimerase/dehydratase family. Expressed in all tissues examined. Detected in most cell types examined, but not observed in endothelial cells, glioma cell lines and some leukemia cell lines.

The protein resides in the mitochondrion. This chain is Inactive L-threonine 3-dehydrogenase, mitochondrial, found in Homo sapiens (Human).